A 393-amino-acid chain; its full sequence is Putative bacilysin exporter BacE (393 aa).

10 helical membrane-spanning segments follow: residues 11–31 (LLFGQALSFMGDYCVLPALLI), 43–63 (SGVIAVRSIPMVFQPFLGVLV), 69–89 (VKIMLWTDVIRGVIFLGLTFL), 92–112 (GEYPLLFLALLFVSYGSGVFF), 133–155 (LFAKATTISIIVGAAAGGLFLLG), 160–177 (LAVAFNGVTYLVSAFFIS), 215–235 (MFTMITMALLWGVVYSYFPIV), 244–264 (IGNFILTFCIGFGGFIGAALV), 287–307 (ALFLFTPIFAVSVIAAILFFI), and 353–373 (IVDAAVIMAFIVLLVSGLFLH).

The protein belongs to the major facilitator superfamily.

The protein localises to the cell membrane. Functionally, part of the bacilysin biosynthesis operon. May be involved in self-resistance to bacilysin by permitting efflux of this antibiotic. The protein is Putative bacilysin exporter BacE (bacE) of Bacillus subtilis.